Reading from the N-terminus, the 196-residue chain is Holliday junction branch migration complex subunit RuvA (196 aa).

Residues 1-63 (MLDFIKGEIV…EETHQLFGFI (63 aa)) form a domain I region. The interval 64 to 142 (DKKERQLFTH…PDNIPSSDTI (79 aa)) is domain II. The segment at 143–146 (ITNI) is flexible linker. The tract at residues 146–196 (ISSNITKEAITALITLGFSQSASQKVVNKIVSNNSSSTTIEQIIKKALKLL) is domain III.

The protein belongs to the RuvA family. In terms of assembly, homotetramer. Forms an RuvA(8)-RuvB(12)-Holliday junction (HJ) complex. HJ DNA is sandwiched between 2 RuvA tetramers; dsDNA enters through RuvA and exits via RuvB. An RuvB hexamer assembles on each DNA strand where it exits the tetramer. Each RuvB hexamer is contacted by two RuvA subunits (via domain III) on 2 adjacent RuvB subunits; this complex drives branch migration. In the full resolvosome a probable DNA-RuvA(4)-RuvB(12)-RuvC(2) complex forms which resolves the HJ.

The protein localises to the cytoplasm. Functionally, the RuvA-RuvB-RuvC complex processes Holliday junction (HJ) DNA during genetic recombination and DNA repair, while the RuvA-RuvB complex plays an important role in the rescue of blocked DNA replication forks via replication fork reversal (RFR). RuvA specifically binds to HJ cruciform DNA, conferring on it an open structure. The RuvB hexamer acts as an ATP-dependent pump, pulling dsDNA into and through the RuvAB complex. HJ branch migration allows RuvC to scan DNA until it finds its consensus sequence, where it cleaves and resolves the cruciform DNA. This Azobacteroides pseudotrichonymphae genomovar. CFP2 protein is Holliday junction branch migration complex subunit RuvA.